Reading from the N-terminus, the 276-residue chain is Golgi apparatus membrane protein TVP23 homolog C (276 aa).

M1 carries the post-translational modification N-acetylmethionine. Residues 1-21 form a disordered region; sequence MLQQDSNDDTEDVSLFDAEEE. A run of 2 helical transmembrane segments spans residues 52 to 72 and 126 to 146; these read LLCE…ILLL and IFWL…FSAL. Residues 254 to 276 form a disordered region; that stretch reads GESPNSRGTGEPGPKFHLASGMH.

The protein belongs to the TVP23 family.

Its subcellular location is the membrane. In Homo sapiens (Human), this protein is Golgi apparatus membrane protein TVP23 homolog C (TVP23C).